The sequence spans 264 residues: Acyl-[acyl-carrier-protein]--UDP-N-acetylglucosamine O-acyltransferase (264 aa).

The protein belongs to the transferase hexapeptide repeat family. LpxA subfamily. Homotrimer.

Its subcellular location is the cytoplasm. It carries out the reaction a (3R)-hydroxyacyl-[ACP] + UDP-N-acetyl-alpha-D-glucosamine = a UDP-3-O-[(3R)-3-hydroxyacyl]-N-acetyl-alpha-D-glucosamine + holo-[ACP]. It functions in the pathway glycolipid biosynthesis; lipid IV(A) biosynthesis; lipid IV(A) from (3R)-3-hydroxytetradecanoyl-[acyl-carrier-protein] and UDP-N-acetyl-alpha-D-glucosamine: step 1/6. Its function is as follows. Involved in the biosynthesis of lipid A, a phosphorylated glycolipid that anchors the lipopolysaccharide to the outer membrane of the cell. This is Acyl-[acyl-carrier-protein]--UDP-N-acetylglucosamine O-acyltransferase from Haemophilus ducreyi (strain 35000HP / ATCC 700724).